The chain runs to 58 residues: U11-myrmicitoxin-Tb1a (58 aa).

Positions L1–A24 are excised as a propeptide. Residues C34 and C57 are joined by a disulfide bond.

Belongs to the formicidae venom precursor-01 superfamily. Expressed by the venom gland.

It is found in the secreted. The protein localises to the target cell membrane. Neurotoxin that causes irreversible rapid flaccid paralysis in blowflies and honeybees upon intrathoracic injection. Causes a quick and irreversible cytolytic effect (at 10 uM) indicating it possibly acts as a pore-forming peptide. Shows only weak effect on aphids (A.pisum) at high doses 24 hours post intrathoracic injection. In vitro, is not cytotoxic on the dipteran S2 Drosophila embryonic cell line. The chain is U11-myrmicitoxin-Tb1a from Tetramorium bicarinatum (Tramp ant).